Consider the following 326-residue polypeptide: Ficolin-1 (326 aa).

The N-terminal stretch at 1–29 (MELSGATMARGLAVLLVLFLHIKNLPAQA) is a signal peptide. In terms of domain architecture, Collagen-like spans 55–93 (GLPGAPGPKGEAGVIGERGERGLPGAPGKAGPVGPKGDR). Residues 72-111 (RGERGLPGAPGKAGPVGPKGDRGEKGMRGEKGDAGQSQSC) form a disordered region. Residues 77–89 (LPGAPGKAGPVGP) are compositionally biased toward low complexity. Basic and acidic residues predominate over residues 90-104 (KGDRGEKGMRGEKGD). Residues 109-326 (QSCATGPRNC…KVSEMKVRPA (218 aa)) enclose the Fibrinogen C-terminal domain. 2 disulfides stabilise this stretch: Cys-111/Cys-139 and Cys-118/Cys-146. The segment at 115–154 (PRNCKDLLDRGYFLSGWHTIYLPDCRPLTVLCDMDTDGGG) is a domain; contributes to trimerization. Residues 155–243 (WTVFQRRMDG…LVLGAFVGGS (89 aa)) form a b domain; contributes to trimerization region. Positions 262, 264, 266, and 268 each coordinate Ca(2+). Cys-270 and Cys-283 are disulfide-bonded. Residue 282–284 (DCH) participates in a carbohydrate binding. A glycan (N-linked (GlcNAc...) asparagine) is linked at Asn-305. Residues 317 to 326 (KVSEMKVRPA) form a p domain region.

It belongs to the ficolin lectin family. As to quaternary structure, homotrimer. Interacts with elastin/ELN. Interacts (via Fibrinogen C-terminal domain) with FFAR2. Interacts with CRP; may regulate monocyte activation by FCN1. As to expression, peripheral blood leukocytes, monocytes and granulocytes. Also detected in spleen, lung, and thymus, may be due to the presence of tissue macrophages or trapped blood in these tissues. Not detected on lymphocytes.

The protein localises to the secreted. Its subcellular location is the cell membrane. In terms of biological role, extracellular lectin functioning as a pattern-recognition receptor in innate immunity. Binds the sugar moieties of pathogen-associated molecular patterns (PAMPs) displayed on microbes and activates the lectin pathway of the complement system. May also activate monocytes through a G protein-coupled receptor, FFAR2, inducing the secretion of interleukin-8/IL-8. Binds preferentially to 9-O-acetylated 2-6-linked sialic acid derivatives and to various glycans containing sialic acid engaged in a 2-3 linkage. The sequence is that of Ficolin-1 (FCN1) from Homo sapiens (Human).